Consider the following 190-residue polypeptide: Translation initiation factor IF-3 (190 aa).

A disordered region spans residues 159–190 (QSEVQQKPKREGRNMIMFLSPRKSPLIKKDNE).

Belongs to the IF-3 family. As to quaternary structure, monomer.

Its subcellular location is the cytoplasm. In terms of biological role, IF-3 binds to the 30S ribosomal subunit and shifts the equilibrium between 70S ribosomes and their 50S and 30S subunits in favor of the free subunits, thus enhancing the availability of 30S subunits on which protein synthesis initiation begins. The sequence is that of Translation initiation factor IF-3 from Prochlorococcus marinus (strain MIT 9215).